Reading from the N-terminus, the 156-residue chain is uncharacterized protein (156 aa).

3 consecutive transmembrane segments (helical) span residues 21–41 (GVLF…AISL), 54–74 (TICS…IDFA), and 80–100 (SVLV…WALF).

It is found in the membrane. This is an uncharacterized protein from Saccharomyces cerevisiae (strain ATCC 204508 / S288c) (Baker's yeast).